The following is a 314-amino-acid chain: Protein SPOROCYTELESS (314 aa).

A compositionally biased stretch (polar residues) spans 1–17 (MATSLFFMSTDQNSVGN). Disordered stretches follow at residues 1–20 (MATS…NPND) and 33–62 (GEIR…PTLR). The SPL motif lies at 62–70 (RGMGVAKLE). Residues 308–314 (IDLSLKL) carry the EAR motif.

Belongs to the NOZZLE family. In terms of assembly, homodimer and heterodimer with SPEARs. Interacts in vitro with YAB1, YAB3 and YAB4. Interacts (via EAR motif) with TPL, TPR1, TPR2, TPR3 and TPR4. Interacts with SPEAR1, SPEAR2, SPEAR3, SPEAR4, TCP1, TCP6, TCP8, TCP9, TCP11, TCP15, TCP20, TCP21 and TCP23. Interacts with TCP2, TCP3, TCP4, TCP5, TCP10, TCP13, TCP17 and TCP24. Expressed in flower buds. Not found in leaves, siliques and stems. Detected in rosette leaves, stem tissue and seedlings.

The protein resides in the nucleus. Its function is as follows. Transcriptional regulator of sporocyte development. Acts as an adapter-like transcriptional repressor recruiting TPL/TPR corepressors to inhibit TCP transcription factors. Required for nucellus and embryo sac development. Plays a central role in patterning both the proximal-distal and the adaxial-abaxial axes during ovule development. Involved in establishing the prospective chalaza of the ovule and in controlling the cell number and the length of the funiculus, and is required for the development of the integuments. Required, with BEL1, for cytokinin-induced PIN1 expression in ovules. Involved in controlling stamen identity. May also regulate the morphology of lateral organs by repressing auxin production. The protein is Protein SPOROCYTELESS of Arabidopsis thaliana (Mouse-ear cress).